We begin with the raw amino-acid sequence, 642 residues long: G protein-coupled receptor kinase 1 (642 aa).

An N-terminal region spans residues 1-202 (MEIENIVANT…LEKRPVDKHT (202 aa)). An RGS domain is found at 52 to 188 (YAFVVEKQPI…AESMYFHRFL (137 aa)). The 268-residue stretch at 203–470 (FRLYRVLGKG…AEEIRAHPFF (268 aa)) folds into the Protein kinase domain. Residues 209–217 (LGKGGFGEV) and Lys232 each bind ATP. The active-site Proton acceptor is the Asp328. Residues 480–545 (EPVPWKKMEA…GCVSIPWQSE (66 aa)) enclose the AGC-kinase C-terminal domain. Positions 612 to 642 (VEQQQPPKTSTQTPAVRSSRAASASGRTLVI) are disordered. Low complexity predominate over residues 614–636 (QQQPPKTSTQTPAVRSSRAASAS).

Belongs to the protein kinase superfamily. AGC Ser/Thr protein kinase family. GPRK subfamily.

It catalyses the reaction [G-protein-coupled receptor] + ATP = [G-protein-coupled receptor]-phosphate + ADP + H(+). In terms of biological role, specifically phosphorylates the activated forms of G protein-coupled receptors. This Caenorhabditis elegans protein is G protein-coupled receptor kinase 1 (grk-1).